A 409-amino-acid polypeptide reads, in one-letter code: uncharacterized protein (409 aa).

Belongs to the mimivirus L17x/L18x family.

This is an uncharacterized protein from Acanthamoeba polyphaga mimivirus (APMV).